We begin with the raw amino-acid sequence, 173 residues long: ATP-dependent protease subunit HslV (173 aa).

T2 is an active-site residue. Na(+) is bound by residues G158, D161, and S164.

This sequence belongs to the peptidase T1B family. HslV subfamily. A double ring-shaped homohexamer of HslV is capped on each side by a ring-shaped HslU homohexamer. The assembly of the HslU/HslV complex is dependent on binding of ATP.

The protein localises to the cytoplasm. The catalysed reaction is ATP-dependent cleavage of peptide bonds with broad specificity.. Allosterically activated by HslU binding. In terms of biological role, protease subunit of a proteasome-like degradation complex believed to be a general protein degrading machinery. This Haemophilus ducreyi (strain 35000HP / ATCC 700724) protein is ATP-dependent protease subunit HslV.